The following is a 323-amino-acid chain: MAAAAAANGTGGSSGMEVDAAVVPSVMASGVTGSVSVALHPLVILNISDHWIRMRSQEGRPMQVIGALIGKQEGRNIEVMNSFELLSHTVEEKIIIDKEYYYTKEEQFKQVFKELEFLGWYTTGGPPDPSDIHVHKQVCEIIESPLFLKLNPMTKHTDLPVSVFESVIDIINGEATMLFAELTYTLATEEAERIGVDHVARMTATGSGENSTVAEHLIAQHSAIKMLHSRVKLILEYVKASEAGEVPFNHEILREAYALCHCLPVLSTDKFKTDFYDQCNDVGLMAYLGTITKTCNTMNQFVNKFNVLYDRQGIGRRMRGLFF.

An MPN domain is found at 37–170 (VALHPLVILN…VSVFESVIDI (134 aa)).

Belongs to the peptidase M67A family. CSN6 subfamily. In terms of assembly, component of the CSN complex, composed of COPS1/GPS1, COPS2, COPS3, COPS4, COPS5, COPS6, COPS7 (COPS7A or COPS7B), COPS8 and COPS9. In the complex, it probably interacts directly with COPS2, COPS4, COPS5, COPS7 (COPS7A or COPS7B) and COPS9. Interacts with the translation initiation factor EIF3S6. Interacts weakly with RBX1. Directly interacts with COP1 and 14-3-3 protein sigma/SFN. Interacts with ERCC6.

It localises to the cytoplasm. The protein localises to the nucleus. Functionally, component of the COP9 signalosome complex (CSN), a complex involved in various cellular and developmental processes. The CSN complex is an essential regulator of the ubiquitin (Ubl) conjugation pathway by mediating the deneddylation of the cullin subunits of SCF-type E3 ligase complexes, leading to decrease the Ubl ligase activity of SCF-type complexes such as SCF, CSA or DDB2. The complex is also involved in phosphorylation of p53/TP53, c-jun/JUN, IkappaBalpha/NFKBIA, ITPK1 and IRF8, possibly via its association with CK2 and PKD kinases. CSN-dependent phosphorylation of TP53 and JUN promotes and protects degradation by the Ubl system, respectively. Has some glucocorticoid receptor-responsive activity. Stabilizes COP1 through reducing COP1 auto-ubiquitination and decelerating COP1 turnover rate, hence regulates the ubiquitination of COP1 targets, including SFN. This Sus scrofa (Pig) protein is COP9 signalosome complex subunit 6 (COPS6).